The sequence spans 653 residues: Sulfate transporter 1.2 (653 aa).

The interval 1–30 (MSSRAHPVDGSPATDGGHVPMKPSPTRHKV) is disordered. Over 1–91 (MSSRAHPVDG…GRNYTFKKFR (91 aa)) the chain is Cytoplasmic. Residues 92–112 (GDLISGLTIASLCIPQDIGYA) traverse the membrane as a helical segment. Residues 113-116 (KLAN) are Extracellular-facing. Residues 117-137 (LDPKYGLYSSFVPPLVYACMG) traverse the membrane as a helical segment. The Cytoplasmic segment spans residues 138–141 (SSRD). Residues 142 to 162 (IAIGPVAVVSLLLGTLLRAEI) form a helical membrane-spanning segment. Over 163 to 173 (DPNTSPDEYLR) the chain is Extracellular. 2 consecutive transmembrane segments (helical) span residues 174–194 (LAFT…FFRL) and 195–215 (GFLI…GAAI). Residues 216–253 (TIALQQLKGFLGIKKFTKKTDIISVLESVFKAAHHGWN) lie on the Extracellular side of the membrane. Residues 254-274 (WQTILIGASFLTFLLTSKIIG) form a helical membrane-spanning segment. Residues 275-280 (KKSKKL) lie on the Cytoplasmic side of the membrane. A helical membrane pass occupies residues 281–301 (FWVPAIAPLISVIVSTFFVYI). The Extracellular portion of the chain corresponds to 302–339 (TRADKQGVQIVKHLDQGINPSSFHLIYFTGDNLAKGIR). A helical transmembrane segment spans residues 340–360 (IGVVAGMVALTEAVAIGRTFA). The Cytoplasmic segment spans residues 361 to 372 (AMKDYQIDGNKE). A helical membrane pass occupies residues 373-393 (MVALGMMNVVGSMSSCYVATG). The Extracellular segment spans residues 394 to 409 (SFSRSAVNFMAGCQTA). Residues 410 to 430 (VSNIIMSIVVLLTLLFLTPLF) form a helical membrane-spanning segment. Residues 431 to 438 (KYTPNAIL) are Cytoplasmic-facing. Residues 439–459 (AAIIINAVIPLIDIQAAILIF) form a helical membrane-spanning segment. Residues 460-466 (KVDKLDF) lie on the Extracellular side of the membrane. The chain crosses the membrane as a helical span at residues 467–487 (IACIGAFFGVIFVSVEIGLLI). Over 488 to 653 (AVSISFAKIL…ACCPKLSNEV (166 aa)) the chain is Cytoplasmic. Positions 522–645 (QYPEATMVPG…LTVADAVEAC (124 aa)) constitute an STAS domain.

It belongs to the SLC26A/SulP transporter (TC 2.A.53.1) family. In terms of assembly, homodimer. Interacts with OASA1 through its STAS domain. In terms of tissue distribution, expressed in lateral root cap, root hairs, epidermal and cortical cells of roots.

Its subcellular location is the cell membrane. Interaction with OASA1 negatively impacts the transporter activity. In terms of biological role, high-affinity H(+)/sulfate cotransporter that mediates the uptake of the environmental sulfate by plant roots. Plays a central role in the regulation of sulfate assimilation. Unable to transport molybdate. The sequence is that of Sulfate transporter 1.2 (SULTR1;2) from Arabidopsis thaliana (Mouse-ear cress).